The primary structure comprises 453 residues: 4,4'-diapolycopene-4,4'-dial dehydrogenase (453 aa).

The segment covering 1–20 (MPDNDSHSLKSLPERQREDL) has biased composition (basic and acidic residues). Residues 1 to 23 (MPDNDSHSLKSLPERQREDLFSA) form a disordered region. Active-site residues include E215 and C249.

The protein belongs to the aldehyde dehydrogenase family.

The catalysed reaction is all-trans-4,4'-diapolycopene-4,4'-dial + 2 A + 2 H2O = all-trans-4,4'-diapolycopene-4,4'-dioate + 2 AH2 + 2 H(+). It functions in the pathway carotenoid biosynthesis. Its function is as follows. Involved in the biosynthesis of the major C30 carotenoid 4,4'-diapolycopene-4,4'-dioic acid, which protects B.firmus from peroxidative reactions. Catalyzes the oxidation of 4,4'-diapolycopene-4,4'-dial to yield 4,4'-diapolycopene-4,4'-dioic aci. This is 4,4'-diapolycopene-4,4'-dial dehydrogenase from Cytobacillus firmus (Bacillus firmus).